The following is a 206-amino-acid chain: Ribonuclease HII (206 aa).

The 189-residue stretch at 18–206 (LRIAGVDEVG…PVHNILYQEK (189 aa)) folds into the RNase H type-2 domain. Positions 24, 25, and 115 each coordinate a divalent metal cation.

It belongs to the RNase HII family. Mn(2+) is required as a cofactor. Mg(2+) serves as cofactor.

The protein localises to the cytoplasm. It catalyses the reaction Endonucleolytic cleavage to 5'-phosphomonoester.. Endonuclease that specifically degrades the RNA of RNA-DNA hybrids. The protein is Ribonuclease HII of Dinoroseobacter shibae (strain DSM 16493 / NCIMB 14021 / DFL 12).